A 300-amino-acid chain; its full sequence is Protoheme IX farnesyltransferase 1 (300 aa).

8 consecutive transmembrane segments (helical) span residues 28 to 48 (VVAL…PGAV), 50 to 70 (VQPL…AAAY), 106 to 126 (AMAI…TAWL), 150 to 170 (IVVG…AITG), 176 to 196 (ALLL…ALAI), 222 to 242 (CIML…LVGM), 243 to 263 (CGPL…YKAW), and 280 to 300 (FSIY…YLWS).

This sequence belongs to the UbiA prenyltransferase family. Protoheme IX farnesyltransferase subfamily.

The protein resides in the cell inner membrane. The enzyme catalyses heme b + (2E,6E)-farnesyl diphosphate + H2O = Fe(II)-heme o + diphosphate. Its pathway is porphyrin-containing compound metabolism; heme O biosynthesis; heme O from protoheme: step 1/1. Converts heme B (protoheme IX) to heme O by substitution of the vinyl group on carbon 2 of heme B porphyrin ring with a hydroxyethyl farnesyl side group. The chain is Protoheme IX farnesyltransferase 1 from Shewanella loihica (strain ATCC BAA-1088 / PV-4).